A 468-amino-acid chain; its full sequence is Glutamate--tRNA ligase (468 aa).

A 'HIGH' region motif is present at residues 8 to 18 (PSPTGDPHVGT). The short motif at 243 to 247 (KISKR) is the 'KMSKS' region element. Lys-246 contacts ATP.

The protein belongs to the class-I aminoacyl-tRNA synthetase family. Glutamate--tRNA ligase type 1 subfamily. In terms of assembly, monomer.

It localises to the cytoplasm. The enzyme catalyses tRNA(Glu) + L-glutamate + ATP = L-glutamyl-tRNA(Glu) + AMP + diphosphate. Catalyzes the attachment of glutamate to tRNA(Glu) in a two-step reaction: glutamate is first activated by ATP to form Glu-AMP and then transferred to the acceptor end of tRNA(Glu). The protein is Glutamate--tRNA ligase of Thermus thermophilus (strain ATCC BAA-163 / DSM 7039 / HB27).